Here is a 386-residue protein sequence, read N- to C-terminus: Cytochrome b (386 aa).

4 consecutive transmembrane segments (helical) span residues 32-52 (TGSL…FTAM), 76-98 (YLIR…GHIG), 113-133 (VWVI…TGYC), and 179-199 (FFAL…MHLM). The heme b site is built by His-82 and His-96. Residues His-183 and His-197 each contribute to the heme b site. His-202 contributes to the a ubiquinone binding site. Helical transmembrane passes span 225–245 (FVFK…TFVF), 289–309 (LGGV…PVTD), 321–341 (FSKT…QLGQ), and 348–368 (FIEM…VLVP).

It belongs to the cytochrome b family. Fungal cytochrome b-c1 complex contains 10 subunits; 3 respiratory subunits, 2 core proteins and 5 low-molecular weight proteins. Cytochrome b-c1 complex is a homodimer. Heme b is required as a cofactor.

The protein localises to the mitochondrion inner membrane. Component of the ubiquinol-cytochrome c reductase complex (complex III or cytochrome b-c1 complex) that is part of the mitochondrial respiratory chain. The b-c1 complex mediates electron transfer from ubiquinol to cytochrome c. Contributes to the generation of a proton gradient across the mitochondrial membrane that is then used for ATP synthesis. The protein is Cytochrome b (COB) of Wickerhamomyces pijperi (Yeast).